The chain runs to 683 residues: uncharacterized protein (683 aa).

Transmembrane regions (helical) follow at residues 12 to 32, 41 to 61, 84 to 104, 110 to 130, 162 to 182, 194 to 214, 221 to 241, 377 to 397, 413 to 433, 495 to 515, 548 to 568, 573 to 593, 603 to 623, and 645 to 665; these read LLLY…MMGL, LWLG…IGLI, MAIA…GILF, GLAY…LLAP, IAVL…IQGV, FAVG…LGGM, QVAQ…MIAW, LNFV…PHIL, VAWA…LAAL, IAGL…AAAL, VTTA…VTSL, ILFL…PVLV, AAGA…YIIV, and IASG…VSLL.

It belongs to the sodium:solute symporter (SSF) (TC 2.A.21) family.

It localises to the cell membrane. This is an uncharacterized protein from Cupriavidus necator (strain ATCC 17699 / DSM 428 / KCTC 22496 / NCIMB 10442 / H16 / Stanier 337) (Ralstonia eutropha).